Reading from the N-terminus, the 245-residue chain is Fibroblast growth factor 13 (245 aa).

Residues 1 to 36 (MAAAIASSLIRQKRQAREREKSNACKCVSSPSKGKT) form a disordered region. Residues 1–62 (MAAAIASSLI…GSKKRRRRRP (62 aa)) are mediates targeting to the nucleus. Residues 67–201 (KGIVTKLYSR…AHFLPKPLKV (135 aa)) are mediates interaction with sodium channels. S208 carries the post-translational modification Phosphoserine. A disordered region spans residues 213-245 (TEFSRSGSGTPTKSRSVSGVLNGGKSMSHNEST). Positions 215–245 (FSRSGSGTPTKSRSVSGVLNGGKSMSHNEST) are enriched in polar residues.

This sequence belongs to the heparin-binding growth factors family. Interacts with SCN8A; regulates SCN8A activity. Interacts with SCN1A; may regulate SCN1A activity. Interacts with SCN5A; the interaction is direct and may regulate SNC5A density at membranes and function. May also interact with SCN2A and SCN11A. Interacts with MAPK8IP2; may regulate the MAPK8IP2 scaffolding activity. Post-translationally, may be phosphorylated. In terms of tissue distribution, ubiquitously expressed. Predominantly expressed in the nervous system.

The protein resides in the nucleus. Its subcellular location is the cytoplasm. The protein localises to the cell projection. It is found in the filopodium. It localises to the growth cone. The protein resides in the dendrite. Its subcellular location is the cell membrane. The protein localises to the sarcolemma. Its function is as follows. Microtubule-binding protein which directly binds tubulin and is involved in both polymerization and stabilization of microtubules. Through its action on microtubules, may participate in the refinement of axons by negatively regulating axonal and leading processes branching. Plays a crucial role in neuron polarization and migration in the cerebral cortex and the hippocampus. Regulates voltage-gated sodium channel transport and function. May also play a role in MAPK signaling. Required for the development of axonal initial segment-targeting inhibitory GABAergic synapses made by chandelier neurons. The chain is Fibroblast growth factor 13 from Homo sapiens (Human).